A 252-amino-acid polypeptide reads, in one-letter code: Sulfate transporter CysZ (252 aa).

Transmembrane regions (helical) follow at residues 29-49, 66-86, 141-160, 164-186, and 212-232; these read FVLL…FYIF, FLSW…LATF, LVYI…IPAL, VAPF…DYPF, and ALVS…PVAV.

It belongs to the CysZ family.

It is found in the cell inner membrane. In terms of biological role, high affinity, high specificity proton-dependent sulfate transporter, which mediates sulfate uptake. Provides the sulfur source for the cysteine synthesis pathway. The protein is Sulfate transporter CysZ of Vibrio atlanticus (strain LGP32) (Vibrio splendidus (strain Mel32)).